The following is a 298-amino-acid chain: ER-bound oxygenase mpaB (298 aa).

Topologically, residues 1 to 24 (MDKGTSFFTTPSFSATTRAIFNTM) are lumenal. A helical transmembrane segment spans residues 25-45 (PQWFSFAVGLLIAYPLLINSL). Residues 46 to 298 (RYRRLKQLQK…RLRKAMLYVE (253 aa)) are Cytoplasmic-facing.

It belongs to the mpaB oxygenase family.

Its subcellular location is the endoplasmic reticulum membrane. It catalyses the reaction 4-farnesyl-3,5-dihydroxy-6-methylphthalide + AH2 + 2 O2 = (4E,8E)-10-(4,6-dihydroxy-7-methyl-3-oxo-1,3-dihydro-2-benzofuran-5-yl)-4,8-dimethyldeca-4,8-dienoate + acetone + A + H2O + H(+). It functions in the pathway secondary metabolite biosynthesis; terpenoid biosynthesis. Its function is as follows. ER-bound oxygenase; part of the gene cluster that mediates the biosynthesis of mycophenolic acid (MPA), the first isolated antibiotic natural product in the world obtained from a culture of Penicillium brevicompactum in 1893. MpaB catalyzes the oxidative cleavage the C19-C20 double bond in farnesyl-DHMP (FDHMP) to yield FDHMP-3C via a mycophenolic aldehyde intermediate. The first step of the pathway is the synthesis of 5-methylorsellinic acid (5MOA) by the cytosolic polyketide synthase mpaC. 5MOA is then converted to the phthalide compound 5,7-dihydroxy-4,6-dimethylphthalide (DHMP) by the endoplasmic reticulum-bound cytochrome P450 monooxygenase mpaDE. MpaDE first catalyzes hydroxylation of 5-MOA to 4,6-dihydroxy-2-(hydroxymethyl)-3-methylbenzoic acid (DHMB). MpaDE then acts as a lactone synthase that catalyzes the ring closure to convert DHMB into DHMP. The next step is the prenylation of DHMP by the Golgi apparatus-associated prenyltransferase mpaA to yield farnesyl-DHMP (FDHMP). The ER-bound oxygenase mpaB then mediates the oxidative cleavage the C19-C20 double bond in FDHMP to yield FDHMP-3C via a mycophenolic aldehyde intermediate. The O-methyltransferase mpaG catalyzes the methylation of FDHMP-3C to yield MFDHMP-3C. After the cytosolic methylation of FDHMP-3C, MFDHMP-3C enters into peroxisomes probably via free diffusion due to its low molecular weight. Upon a peroxisomal CoA ligation reaction, catalyzed by a beta-oxidation component enzyme acyl-CoA ligase ACL891, MFDHMP-3C-CoA would then be restricted to peroxisomes for the following beta-oxidation pathway steps. The peroxisomal beta-oxidation machinery than converts MFDHMP-3C-CoA into MPA_CoA, via a beta-oxidation chain-shortening process. Finally mpaH acts as a peroxisomal acyl-CoA hydrolase with high substrate specificity toward MPA-CoA to release the final product MPA. This chain is ER-bound oxygenase mpaB, found in Penicillium roqueforti (strain FM164).